The sequence spans 300 residues: Bifunctional protein FolD 2 (300 aa).

NADP(+)-binding positions include 165–167 (GRS), S190, and I231.

Belongs to the tetrahydrofolate dehydrogenase/cyclohydrolase family. Homodimer.

It carries out the reaction (6R)-5,10-methylene-5,6,7,8-tetrahydrofolate + NADP(+) = (6R)-5,10-methenyltetrahydrofolate + NADPH. The catalysed reaction is (6R)-5,10-methenyltetrahydrofolate + H2O = (6R)-10-formyltetrahydrofolate + H(+). It participates in one-carbon metabolism; tetrahydrofolate interconversion. Its function is as follows. Catalyzes the oxidation of 5,10-methylenetetrahydrofolate to 5,10-methenyltetrahydrofolate and then the hydrolysis of 5,10-methenyltetrahydrofolate to 10-formyltetrahydrofolate. In Pseudomonas syringae pv. syringae (strain B728a), this protein is Bifunctional protein FolD 2.